A 66-amino-acid chain; its full sequence is UPF0434 protein RPC_0266 (66 aa).

It belongs to the UPF0434 family.

This is UPF0434 protein RPC_0266 from Rhodopseudomonas palustris (strain BisB18).